The following is a 1025-amino-acid chain: Multidrug resistance protein MdtC (1025 aa).

12 helical membrane-spanning segments follow: residues 3-23 (FFAL…AITL), 333-353 (EVEQ…FLFL), 360-380 (IIPA…MYLC), 387-407 (LSLM…IVVL), 431-451 (VGFT…PLLL), 463-483 (FAVT…TLTP), 528-548 (LVGV…ISIP), 853-873 (VILI…LYES), 875-895 (VHPL…LLAL), 897-917 (LFNA…IGIV), 953-973 (PIMM…LSGG), and 984-1004 (ITIV…TPVV).

The protein belongs to the resistance-nodulation-cell division (RND) (TC 2.A.6) family. MdtC subfamily. In terms of assembly, part of a tripartite efflux system composed of MdtA, MdtB and MdtC. MdtC forms a heteromultimer with MdtB.

Its subcellular location is the cell inner membrane. This Shigella sonnei (strain Ss046) protein is Multidrug resistance protein MdtC.